A 251-amino-acid polypeptide reads, in one-letter code: Hydroxyacylglutathione hydrolase (251 aa).

Zn(2+)-binding residues include His-53, His-55, Asp-57, His-58, His-110, Asp-127, and His-165.

It belongs to the metallo-beta-lactamase superfamily. Glyoxalase II family. Monomer. Requires Zn(2+) as cofactor.

It carries out the reaction an S-(2-hydroxyacyl)glutathione + H2O = a 2-hydroxy carboxylate + glutathione + H(+). It functions in the pathway secondary metabolite metabolism; methylglyoxal degradation; (R)-lactate from methylglyoxal: step 2/2. Functionally, thiolesterase that catalyzes the hydrolysis of S-D-lactoyl-glutathione to form glutathione and D-lactic acid. The protein is Hydroxyacylglutathione hydrolase of Escherichia coli (strain SMS-3-5 / SECEC).